Reading from the N-terminus, the 151-residue chain is Lectin-like protein BA14k (151 aa).

Residues M1–A26 form the signal peptide. The chain crosses the membrane as a helical span at residues G83–Q103.

The protein belongs to the BA14k family.

The protein resides in the cell membrane. Its function is as follows. Has immunoglobulin-binding and hemagglutination properties, and can bind to mannose. Essential for virulence. May be involved in LPS biosynthesis or polysaccharide transport. This is Lectin-like protein BA14k from Brucella anthropi (strain ATCC 49188 / DSM 6882 / CCUG 24695 / JCM 21032 / LMG 3331 / NBRC 15819 / NCTC 12168 / Alc 37) (Ochrobactrum anthropi).